Here is a 243-residue protein sequence, read N- to C-terminus: Carboxy-S-adenosyl-L-methionine synthase (243 aa).

Residues Tyr39, 64–66, Asn132, and Arg199 contribute to the S-adenosyl-L-methionine site; that span reads GCS.

Belongs to the class I-like SAM-binding methyltransferase superfamily. Cx-SAM synthase family. In terms of assembly, homodimer.

The enzyme catalyses prephenate + S-adenosyl-L-methionine = carboxy-S-adenosyl-L-methionine + 3-phenylpyruvate + H2O. Functionally, catalyzes the conversion of S-adenosyl-L-methionine (SAM) to carboxy-S-adenosyl-L-methionine (Cx-SAM). The sequence is that of Carboxy-S-adenosyl-L-methionine synthase from Alteromonas mediterranea (strain DSM 17117 / CIP 110805 / LMG 28347 / Deep ecotype).